Reading from the N-terminus, the 146-residue chain is Interleukin-3 (146 aa).

An N-terminal signal peptide occupies residues 1–17 (MSSLSILHLLLLLLSLH). Asparagine 65 carries N-linked (GlcNAc...) asparagine glycosylation.

The protein belongs to the IL-3 family. As to quaternary structure, monomer. Activated T-cells, mast cells, natural killer cells.

Its subcellular location is the secreted. Granulocyte/macrophage colony-stimulating factors are cytokines that act in hematopoiesis by controlling the production, differentiation, and function of 2 related white cell populations of the blood, the granulocytes and the monocytes-macrophages. In terms of biological role, this CSF induces granulocytes, macrophages, mast cells, stem cells, erythroid cells, eosinophils and megakaryocytes. The chain is Interleukin-3 (IL3) from Ovis aries (Sheep).